We begin with the raw amino-acid sequence, 209 residues long: uncharacterized protein (209 aa).

The protein belongs to the flavoredoxin family. Requires FMN as cofactor.

This is an uncharacterized protein from Halalkalibacterium halodurans (strain ATCC BAA-125 / DSM 18197 / FERM 7344 / JCM 9153 / C-125) (Bacillus halodurans).